The primary structure comprises 119 residues: Large ribosomal subunit protein bL20 (119 aa).

It belongs to the bacterial ribosomal protein bL20 family.

Its function is as follows. Binds directly to 23S ribosomal RNA and is necessary for the in vitro assembly process of the 50S ribosomal subunit. It is not involved in the protein synthesizing functions of that subunit. In Colwellia psychrerythraea (strain 34H / ATCC BAA-681) (Vibrio psychroerythus), this protein is Large ribosomal subunit protein bL20.